Reading from the N-terminus, the 190-residue chain is UPF0200 protein TSIB_0920 (190 aa).

7-14 (GMPGSGKG) lines the ATP pocket.

Belongs to the UPF0200 family.

In Thermococcus sibiricus (strain DSM 12597 / MM 739), this protein is UPF0200 protein TSIB_0920.